Here is a 781-residue protein sequence, read N- to C-terminus: 5-methyltetrahydropteroyltriglutamate--homocysteine methyltransferase (781 aa).

5-methyltetrahydropteroyltri-L-glutamate contacts are provided by residues 20-23 (RELK) and lysine 131. Residues 453 to 455 (IGS) and glutamate 506 each bind L-homocysteine. L-methionine-binding positions include 453-455 (IGS) and glutamate 506. Residues 537–538 (RC) and tryptophan 583 contribute to the 5-methyltetrahydropteroyltri-L-glutamate site. Position 621 (aspartate 621) interacts with L-homocysteine. Residue aspartate 621 coordinates L-methionine. Glutamate 627 serves as a coordination point for 5-methyltetrahydropteroyltri-L-glutamate. Residues histidine 663, cysteine 665, and glutamate 687 each coordinate Zn(2+). Histidine 716 (proton donor) is an active-site residue. Cysteine 748 is a binding site for Zn(2+).

This sequence belongs to the vitamin-B12 independent methionine synthase family. Requires Zn(2+) as cofactor.

It carries out the reaction 5-methyltetrahydropteroyltri-L-glutamate + L-homocysteine = tetrahydropteroyltri-L-glutamate + L-methionine. It participates in amino-acid biosynthesis; L-methionine biosynthesis via de novo pathway; L-methionine from L-homocysteine (MetE route): step 1/1. In terms of biological role, catalyzes the transfer of a methyl group from 5-methyltetrahydrofolate to homocysteine resulting in methionine formation. The chain is 5-methyltetrahydropteroyltriglutamate--homocysteine methyltransferase from Bradyrhizobium diazoefficiens (strain JCM 10833 / BCRC 13528 / IAM 13628 / NBRC 14792 / USDA 110).